Consider the following 477-residue polypeptide: Glycogen synthase (477 aa).

Lysine 15 is an ADP-alpha-D-glucose binding site.

The protein belongs to the glycosyltransferase 1 family. Bacterial/plant glycogen synthase subfamily.

The enzyme catalyses [(1-&gt;4)-alpha-D-glucosyl](n) + ADP-alpha-D-glucose = [(1-&gt;4)-alpha-D-glucosyl](n+1) + ADP + H(+). The protein operates within glycan biosynthesis; glycogen biosynthesis. Synthesizes alpha-1,4-glucan chains using ADP-glucose. This is Glycogen synthase from Cronobacter sakazakii (strain ATCC BAA-894) (Enterobacter sakazakii).